We begin with the raw amino-acid sequence, 91 residues long: ATP-dependent Clp protease adapter protein ClpS (91 aa).

This sequence belongs to the ClpS family. Binds to the N-terminal domain of the chaperone ClpA.

In terms of biological role, involved in the modulation of the specificity of the ClpAP-mediated ATP-dependent protein degradation. The chain is ATP-dependent Clp protease adapter protein ClpS from Synechococcus sp. (strain ATCC 27144 / PCC 6301 / SAUG 1402/1) (Anacystis nidulans).